Here is a 376-residue protein sequence, read N- to C-terminus: MRAFLALEDGFVLEGRSFTGRGESGGEVIFNTGMTGYQEVLTDPSYAGQMVCMTYPLIGNYGVTAEDMESGKVHVEAFIVKECCRTPSNWRAIMSLPDYLAQHGVMGIEGIDTRALTRHLRINGAMRGIISTETDDRDELVRRARALPTMEGQNLVTRVAPATPYRWDGTRPQPVQLAADGAYAWPGTGPRLVVYDYGIKWNILRLLTDQGFDLLVVPPSFTAMQVAASGAEAVFLSNGPGDPATLTDEVREIRVMTERMPVAGICLGHQLLGHALGGTTHKLKFGHHGCNHPVKDLVTGHIEISSQNHGFCVDIESVPDVEITHVNLNDGTLEGFAHKTRPILAVQHHPEASPGPTDSRYFFARFRGMVREAVGR.

The segment at 1-187 (MRAFLALEDG…AADGAYAWPG (187 aa)) is CPSase. Serine 45, glycine 239, and glycine 241 together coordinate L-glutamine. One can recognise a Glutamine amidotransferase type-1 domain in the interval 191–376 (RLVVYDYGIK…RGMVREAVGR (186 aa)). The active-site Nucleophile is cysteine 266. 5 residues coordinate L-glutamine: leucine 267, glutamine 270, asparagine 308, glycine 310, and phenylalanine 311. Active-site residues include histidine 349 and glutamate 351.

This sequence belongs to the CarA family. In terms of assembly, composed of two chains; the small (or glutamine) chain promotes the hydrolysis of glutamine to ammonia, which is used by the large (or ammonia) chain to synthesize carbamoyl phosphate. Tetramer of heterodimers (alpha,beta)4.

It carries out the reaction hydrogencarbonate + L-glutamine + 2 ATP + H2O = carbamoyl phosphate + L-glutamate + 2 ADP + phosphate + 2 H(+). The catalysed reaction is L-glutamine + H2O = L-glutamate + NH4(+). Its pathway is amino-acid biosynthesis; L-arginine biosynthesis; carbamoyl phosphate from bicarbonate: step 1/1. It participates in pyrimidine metabolism; UMP biosynthesis via de novo pathway; (S)-dihydroorotate from bicarbonate: step 1/3. Functionally, small subunit of the glutamine-dependent carbamoyl phosphate synthetase (CPSase). CPSase catalyzes the formation of carbamoyl phosphate from the ammonia moiety of glutamine, carbonate, and phosphate donated by ATP, constituting the first step of 2 biosynthetic pathways, one leading to arginine and/or urea and the other to pyrimidine nucleotides. The small subunit (glutamine amidotransferase) binds and cleaves glutamine to supply the large subunit with the substrate ammonia. The sequence is that of Carbamoyl phosphate synthase small chain from Nitratidesulfovibrio vulgaris (strain DSM 19637 / Miyazaki F) (Desulfovibrio vulgaris).